The following is a 184-amino-acid chain: Phosphodiesterase YfcE (184 aa).

Aspartate 9, histidine 11, aspartate 37, asparagine 73, histidine 105, histidine 127, and histidine 129 together coordinate Mn(2+).

This sequence belongs to the metallophosphoesterase superfamily. YfcE family. Requires Mn(2+) as cofactor.

Its function is as follows. Shows phosphodiesterase activity. The chain is Phosphodiesterase YfcE (yfcE) from Escherichia coli O157:H7.